A 440-amino-acid chain; its full sequence is Nuclear hormone receptor family member nhr-130 (440 aa).

Positions 34–110 form a DNA-binding region, nuclear receptor; it reads LYTCQVCALP…VGMDPGRFQF (77 aa). 2 consecutive NR C4-type zinc fingers follow at residues 37–57 and 74–93; these read CQVC…CRAC and CKKQ…CKKC. One can recognise an NR LBD domain in the interval 184 to 439; it reads EKPLIARNNL…FSHPEMFEDT (256 aa).

It belongs to the nuclear hormone receptor family.

It localises to the nucleus. Functionally, orphan nuclear receptor. This chain is Nuclear hormone receptor family member nhr-130 (nhr-130), found in Caenorhabditis elegans.